We begin with the raw amino-acid sequence, 164 residues long: Neurotrophin-3 (164 aa).

Residues 1 to 3 form the signal peptide; sequence IQS. A propeptide spanning residues 4-120 is cleaved from the precursor; the sequence is TNMDQQGSLT…ALNRTSRRKR (117 aa). An N-linked (GlcNAc...) asparagine glycan is attached at Asn-113.

Belongs to the NGF-beta family.

The protein resides in the secreted. In terms of biological role, seems to promote the survival of visceral and proprioceptive sensory neurons. In Sanzinia madagascariensis (Madagascar tree boa), this protein is Neurotrophin-3 (NTF3).